The primary structure comprises 348 residues: Dihydroorotase (348 aa).

The Zn(2+) site is built by His17 and His19. Substrate-binding positions include 19-21 and Asn45; that span reads HLR. Zn(2+) contacts are provided by Lys103, His140, and His178. N6-carboxylysine is present on Lys103. His140 provides a ligand contact to substrate. Leu223 contributes to the substrate binding site. Zn(2+) is bound at residue Asp251. Asp251 is an active-site residue. Substrate-binding residues include His255 and Ala267.

It belongs to the metallo-dependent hydrolases superfamily. DHOase family. Class II DHOase subfamily. In terms of assembly, homodimer. Zn(2+) serves as cofactor.

It catalyses the reaction (S)-dihydroorotate + H2O = N-carbamoyl-L-aspartate + H(+). It functions in the pathway pyrimidine metabolism; UMP biosynthesis via de novo pathway; (S)-dihydroorotate from bicarbonate: step 3/3. In terms of biological role, catalyzes the reversible cyclization of carbamoyl aspartate to dihydroorotate. This Edwardsiella ictaluri (strain 93-146) protein is Dihydroorotase.